Consider the following 453-residue polypeptide: Aminodeoxychorismate synthase component 1 (453 aa).

L-tryptophan-binding positions include serine 36, 43–46, and 240–242; these read YSRF and PFS. The Proton donor role is filled by glutamate 258. The active-site N6-(4-deoxychorismate)-lysine intermediate is lysine 274.

The protein belongs to the anthranilate synthase component I family. As to quaternary structure, monomer. Heterodimer consisting of two non-identical subunits: a glutamine amidotransferase subunit (PabA) and a aminodeoxychorismate synthase subunit (PabB). Mg(2+) is required as a cofactor.

The enzyme catalyses chorismate + L-glutamine = 4-amino-4-deoxychorismate + L-glutamate. It functions in the pathway cofactor biosynthesis; tetrahydrofolate biosynthesis; 4-aminobenzoate from chorismate: step 1/2. Inhibited by 6-diazo-5-oxo-L-norleucine (DON). The inhibition is competitive with glutamine but uncompetitive with chorismate. Also inhibited by 2-fluorochorismate. Functionally, part of a heterodimeric complex that catalyzes the two-step biosynthesis of 4-amino-4-deoxychorismate (ADC), a precursor of p-aminobenzoate (PABA) and tetrahydrofolate. In the first step, a glutamine amidotransferase (PabA) generates ammonia as a substrate that, along with chorismate, is used in the second step, catalyzed by aminodeoxychorismate synthase (PabB) to produce ADC. PabB, in the absence of PabA, can catalyze the formation of ADC in the presence of exogenous ammonia. In Escherichia coli (strain K12), this protein is Aminodeoxychorismate synthase component 1 (pabB).